The sequence spans 314 residues: Ribosomal RNA small subunit methyltransferase H (314 aa).

Residues 31 to 33, aspartate 49, phenylalanine 76, aspartate 118, and glutamine 125 contribute to the S-adenosyl-L-methionine site; that span reads GGY.

It belongs to the methyltransferase superfamily. RsmH family.

It localises to the cytoplasm. It catalyses the reaction cytidine(1402) in 16S rRNA + S-adenosyl-L-methionine = N(4)-methylcytidine(1402) in 16S rRNA + S-adenosyl-L-homocysteine + H(+). Specifically methylates the N4 position of cytidine in position 1402 (C1402) of 16S rRNA. The chain is Ribosomal RNA small subunit methyltransferase H from Wolbachia pipientis wMel.